Reading from the N-terminus, the 445-residue chain is UDP-N-acetylmuramoylalanine--D-glutamate ligase (445 aa).

Residue glycine 117–threonine 123 participates in ATP binding.

It belongs to the MurCDEF family.

Its subcellular location is the cytoplasm. It catalyses the reaction UDP-N-acetyl-alpha-D-muramoyl-L-alanine + D-glutamate + ATP = UDP-N-acetyl-alpha-D-muramoyl-L-alanyl-D-glutamate + ADP + phosphate + H(+). It functions in the pathway cell wall biogenesis; peptidoglycan biosynthesis. Functionally, cell wall formation. Catalyzes the addition of glutamate to the nucleotide precursor UDP-N-acetylmuramoyl-L-alanine (UMA). This Neisseria gonorrhoeae (strain NCCP11945) protein is UDP-N-acetylmuramoylalanine--D-glutamate ligase.